The sequence spans 477 residues: P3 protein (477 aa).

The tract at residues M1–G21 is disordered. 8 consecutive transmembrane segments (helical) span residues P225–A245, A253–F273, V281–L301, I320–I340, V361–I381, L383–L403, V417–L437, and F450–Y470.

The protein belongs to the bile acid:sodium symporter (BASS) (TC 2.A.28) family.

The protein localises to the membrane. The ubiquitous expression and the conservation of the sequence in distant animal species suggest that the gene codes for a protein with housekeeping functions. This Homo sapiens (Human) protein is P3 protein (SLC10A3).